The chain runs to 922 residues: DNA gyrase subunit A (922 aa).

Over residues 1 to 14 (MTETPTDGGSTPPS) the composition is skewed to low complexity. The tract at residues 1–24 (MTETPTDGGSTPPSDGGGPGGRIE) is disordered. The Topo IIA-type catalytic domain maps to 49–518 (LPDVRDGLKP…ADGDLSMEDL (470 aa)). The active-site O-(5'-phospho-DNA)-tyrosine intermediate is the Tyr137. The GyrA-box motif lies at 545-551 (QRRGGKG). Residues 861–922 (EANGDDELDE…TEPDPGESDG (62 aa)) are disordered. Composition is skewed to acidic residues over residues 863–890 (NGDD…DESA) and 912–922 (DTEPDPGESDG).

The protein belongs to the type II topoisomerase GyrA/ParC subunit family. As to quaternary structure, heterotetramer, composed of two GyrA and two GyrB chains. In the heterotetramer, GyrA contains the active site tyrosine that forms a transient covalent intermediate with DNA, while GyrB binds cofactors and catalyzes ATP hydrolysis.

The protein resides in the cytoplasm. The enzyme catalyses ATP-dependent breakage, passage and rejoining of double-stranded DNA.. In terms of biological role, a type II topoisomerase that negatively supercoils closed circular double-stranded (ds) DNA in an ATP-dependent manner to modulate DNA topology and maintain chromosomes in an underwound state. Negative supercoiling favors strand separation, and DNA replication, transcription, recombination and repair, all of which involve strand separation. Also able to catalyze the interconversion of other topological isomers of dsDNA rings, including catenanes and knotted rings. Type II topoisomerases break and join 2 DNA strands simultaneously in an ATP-dependent manner. The chain is DNA gyrase subunit A from Nocardioides sp. (strain ATCC BAA-499 / JS614).